The chain runs to 940 residues: UvrABC system protein A (940 aa).

33-40 (GVSGSGKS) provides a ligand contact to ATP. The C4-type zinc finger occupies 252-279 (CPVCGFTVPELEPRLFSFNAPFGSCPDC). ABC transporter domains follow at residues 309-586 (WYGK…KKSL) and 606-935 (IDKK…QYLK). 639 to 646 (GVSGSGKS) lines the ATP pocket. The C4-type zinc finger occupies 738-764 (CEACSGDGIIKIEMHFLPDVYVPCEVC).

Belongs to the ABC transporter superfamily. UvrA family. As to quaternary structure, forms a heterotetramer with UvrB during the search for lesions.

The protein localises to the cytoplasm. Its function is as follows. The UvrABC repair system catalyzes the recognition and processing of DNA lesions. UvrA is an ATPase and a DNA-binding protein. A damage recognition complex composed of 2 UvrA and 2 UvrB subunits scans DNA for abnormalities. When the presence of a lesion has been verified by UvrB, the UvrA molecules dissociate. The chain is UvrABC system protein A from Lactococcus lactis subsp. lactis (strain IL1403) (Streptococcus lactis).